The chain runs to 501 residues: Cytochrome P450 4c21 (501 aa).

Heme-binding residues include glutamate 309 and cysteine 447.

It belongs to the cytochrome P450 family. Requires heme as cofactor.

It localises to the endoplasmic reticulum membrane. It is found in the microsome membrane. It catalyses the reaction an organic molecule + reduced [NADPH--hemoprotein reductase] + O2 = an alcohol + oxidized [NADPH--hemoprotein reductase] + H2O + H(+). The polypeptide is Cytochrome P450 4c21 (CYP4C21) (Blattella germanica (German cockroach)).